A 128-amino-acid polypeptide reads, in one-letter code: Large ribosomal subunit protein uL22 (128 aa).

The tract at residues 1–20 (MANGHRSQIKRERNAVKDTR) is disordered. The span at 9 to 20 (IKRERNAVKDTR) shows a compositional bias: basic and acidic residues.

The protein belongs to the universal ribosomal protein uL22 family. As to quaternary structure, part of the 50S ribosomal subunit.

This protein binds specifically to 23S rRNA; its binding is stimulated by other ribosomal proteins, e.g. L4, L17, and L20. It is important during the early stages of 50S assembly. It makes multiple contacts with different domains of the 23S rRNA in the assembled 50S subunit and ribosome. Its function is as follows. The globular domain of the protein is located near the polypeptide exit tunnel on the outside of the subunit, while an extended beta-hairpin is found that lines the wall of the exit tunnel in the center of the 70S ribosome. This Lachnospira eligens (strain ATCC 27750 / DSM 3376 / VPI C15-48 / C15-B4) (Eubacterium eligens) protein is Large ribosomal subunit protein uL22.